The chain runs to 159 residues: Cyclic pyranopterin monophosphate synthase (159 aa).

Substrate contacts are provided by residues Leu76–His78 and Met114–Glu115. The active site involves Asp129.

This sequence belongs to the MoaC family. In terms of assembly, homohexamer; trimer of dimers.

The catalysed reaction is (8S)-3',8-cyclo-7,8-dihydroguanosine 5'-triphosphate = cyclic pyranopterin phosphate + diphosphate. The protein operates within cofactor biosynthesis; molybdopterin biosynthesis. In terms of biological role, catalyzes the conversion of (8S)-3',8-cyclo-7,8-dihydroguanosine 5'-triphosphate to cyclic pyranopterin monophosphate (cPMP). The protein is Cyclic pyranopterin monophosphate synthase of Shewanella oneidensis (strain ATCC 700550 / JCM 31522 / CIP 106686 / LMG 19005 / NCIMB 14063 / MR-1).